A 478-amino-acid polypeptide reads, in one-letter code: Kynureninase (478 aa).

Pyridoxal 5'-phosphate-binding positions include leucine 150, threonine 151, 178–181, serine 234, aspartate 263, histidine 266, and tyrosine 288; that span reads FPSD. Lysine 289 carries the N6-(pyridoxal phosphate)lysine modification. Pyridoxal 5'-phosphate contacts are provided by tryptophan 318 and asparagine 346.

This sequence belongs to the kynureninase family. Homodimer. Pyridoxal 5'-phosphate serves as cofactor.

The protein localises to the cytoplasm. It carries out the reaction L-kynurenine + H2O = anthranilate + L-alanine + H(+). The enzyme catalyses 3-hydroxy-L-kynurenine + H2O = 3-hydroxyanthranilate + L-alanine + H(+). The protein operates within amino-acid degradation; L-kynurenine degradation; L-alanine and anthranilate from L-kynurenine: step 1/1. It functions in the pathway cofactor biosynthesis; NAD(+) biosynthesis; quinolinate from L-kynurenine: step 2/3. Its function is as follows. Catalyzes the cleavage of L-kynurenine (L-Kyn) and L-3-hydroxykynurenine (L-3OHKyn) into anthranilic acid (AA) and 3-hydroxyanthranilic acid (3-OHAA), respectively. This Caenorhabditis elegans protein is Kynureninase.